The chain runs to 346 residues: Protein RecA (346 aa).

68-75 is a binding site for ATP; it reads GPESSGKT.

It belongs to the RecA family.

The protein resides in the cytoplasm. Can catalyze the hydrolysis of ATP in the presence of single-stranded DNA, the ATP-dependent uptake of single-stranded DNA by duplex DNA, and the ATP-dependent hybridization of homologous single-stranded DNAs. It interacts with LexA causing its activation and leading to its autocatalytic cleavage. The sequence is that of Protein RecA from Heliobacterium modesticaldum (strain ATCC 51547 / Ice1).